A 453-amino-acid chain; its full sequence is Calcium-binding tyrosine phosphorylation-regulated protein (453 aa).

The RIIa domain maps to 12–49; sequence YGLKTLLEGVSRAILKTNPTNITQFAAVYFKELIVFRE. Disordered stretches follow at residues 86–165, 246–278, and 406–453; these read PIKP…PVSA, PVSEAEPPKASSAPLQGEQEPPAHEAPDTQVTS, and IINP…PEQV. Positions 143–154 are enriched in low complexity; the sequence is DKPTTPKTDYTP.

As to quaternary structure, interacts with FSCB. Post-translationally, phosphorylated on tyrosine residues during in vitro capacitation. Dephosphorylation affects its ability to bind calcium. Expressed in spermatozoa.

Its subcellular location is the cytoplasm. The protein resides in the cytoskeleton. It is found in the cell projection. It localises to the cilium. The protein localises to the flagellum. Its function is as follows. May function as a regulator of both motility- and head-associated functions such as capacitation and the acrosome reaction. May bind calcium in vitro. The chain is Calcium-binding tyrosine phosphorylation-regulated protein (Cabyr) from Mus musculus (Mouse).